The chain runs to 205 residues: RFTSAFSLGLLLVTATAFPTPGPLGEDFKDDTTSDRLYLTSPDKTEALIKYILGKISAMRKEMCEKYDKCENSKEALAENNLNLPKMAEKDGCFQSGFNQETCLMRITTGLLEYQIYLDYLQNEYEGDKEAIEAVQISSKALAQILRQKVKNPDEVTTPDPTTNASLMNNLQSQNDDWMKNTKIILILRSLENFLQFSLRAIRIK.

The first 21 residues, 1–21, serve as a signal peptide directing secretion; it reads RFTSAFSLGLLLVTATAFPTP. Cysteine 64 and cysteine 70 are oxidised to a cystine. A Phosphoserine modification is found at serine 73. Cysteine 93 and cysteine 103 form a disulfide bridge. The N-linked (GlcNAc...) asparagine glycan is linked to asparagine 164.

Belongs to the IL-6 superfamily. As to quaternary structure, component of a hexamer of two molecules each of IL6, IL6R and IL6ST; first binds to IL6R to associate with the signaling subunit IL6ST. Interacts with IL6R (via the N-terminal ectodomain); this interaction may be affected by IL6R-binding with SORL1, hence decreasing IL6 cis signaling. Interacts with SORL1 (via the N-terminal ectodomain); this interaction leads to IL6 internalization and lysosomal degradation. May form a trimeric complex with the soluble SORL1 ectodomain and soluble IL6R receptor; this interaction might stabilize circulating IL6, hence promoting IL6 trans signaling.

It localises to the secreted. In terms of biological role, cytokine with a wide variety of biological functions in immunity, tissue regeneration, and metabolism. Binds to IL6R, then the complex associates to the signaling subunit IL6ST/gp130 to trigger the intracellular IL6-signaling pathway. The interaction with the membrane-bound IL6R and IL6ST stimulates 'classic signaling', whereas the binding of IL6 and soluble IL6R to IL6ST stimulates 'trans-signaling'. Alternatively, 'cluster signaling' occurs when membrane-bound IL6:IL6R complexes on transmitter cells activate IL6ST receptors on neighboring receiver cells. IL6 is a potent inducer of the acute phase response. Rapid production of IL6 contributes to host defense during infection and tissue injury, but excessive IL6 synthesis is involved in disease pathology. In the innate immune response, is synthesized by myeloid cells, such as macrophages and dendritic cells, upon recognition of pathogens through toll-like receptors (TLRs) at the site of infection or tissue injury. In the adaptive immune response, is required for the differentiation of B cells into immunoglobulin-secreting cells. Plays a major role in the differentiation of CD4(+) T cell subsets. Essential factor for the development of T follicular helper (Tfh) cells that are required for the induction of germinal-center formation. Required to drive naive CD4(+) T cells to the Th17 lineage. Also required for proliferation of myeloma cells and the survival of plasmablast cells. Its function is as follows. Acts as an essential factor in bone homeostasis and on vessels directly or indirectly by induction of VEGF, resulting in increased angiogenesis activity and vascular permeability. Induces, through 'trans-signaling' and synergistically with IL1B and TNF, the production of VEGF. Involved in metabolic controls, is discharged into the bloodstream after muscle contraction increasing lipolysis and improving insulin resistance. 'Trans-signaling' in central nervous system also regulates energy and glucose homeostasis. Mediates, through GLP-1, crosstalk between insulin-sensitive tissues, intestinal L cells and pancreatic islets to adapt to changes in insulin demand. Also acts as a myokine. Plays a protective role during liver injury, being required for maintenance of tissue regeneration. Also has a pivotal role in iron metabolism by regulating HAMP/hepcidin expression upon inflammation or bacterial infection. Through activation of IL6ST-YAP-NOTCH pathway, induces inflammation-induced epithelial regeneration. This Orcinus orca (Killer whale) protein is Interleukin-6 (IL6).